A 142-amino-acid polypeptide reads, in one-letter code: Small ribosomal subunit protein bS6 (142 aa).

Residues 96 to 142 (VTGQSEMLKAEENRSERRERRERPEHDGSADGDDSDSDSDNSDNADE) form a disordered region. The segment covering 103–124 (LKAEENRSERRERRERPEHDGS) has biased composition (basic and acidic residues). The span at 125-142 (ADGDDSDSDSDNSDNADE) shows a compositional bias: acidic residues.

Belongs to the bacterial ribosomal protein bS6 family.

In terms of biological role, binds together with bS18 to 16S ribosomal RNA. This chain is Small ribosomal subunit protein bS6, found in Pseudomonas fluorescens (strain Pf0-1).